The sequence spans 694 residues: Zinc finger BED domain-containing protein 5 (694 aa).

A BED-type zinc finger spans residues 109-165 (RKYDESYLSFGFTYFGNRDAPHAQCVLCKKILSNSSLAPSKLRRHLETKHAAYKDKD). Cysteine 133, cysteine 136, histidine 153, and histidine 158 together coordinate Zn(2+).

This Bos taurus (Bovine) protein is Zinc finger BED domain-containing protein 5 (ZBED5).